A 195-amino-acid polypeptide reads, in one-letter code: Imidazoleglycerol-phosphate dehydratase (195 aa).

It belongs to the imidazoleglycerol-phosphate dehydratase family.

It localises to the cytoplasm. The enzyme catalyses D-erythro-1-(imidazol-4-yl)glycerol 3-phosphate = 3-(imidazol-4-yl)-2-oxopropyl phosphate + H2O. Its pathway is amino-acid biosynthesis; L-histidine biosynthesis; L-histidine from 5-phospho-alpha-D-ribose 1-diphosphate: step 6/9. The sequence is that of Imidazoleglycerol-phosphate dehydratase from Bordetella bronchiseptica (strain ATCC BAA-588 / NCTC 13252 / RB50) (Alcaligenes bronchisepticus).